A 328-amino-acid chain; its full sequence is L-lactate dehydrogenase (328 aa).

NAD(+)-binding positions include valine 18, glutamate 39, lysine 46, tyrosine 71, and 85–86 (GA). Residues glutamine 88 and arginine 94 each coordinate substrate. Residues serine 107, 124-126 (AAN), and serine 149 contribute to the NAD(+) site. Residue 126–129 (NPVD) participates in substrate binding. Residue 154 to 157 (DSAR) coordinates substrate. Residues arginine 159 and histidine 174 each coordinate beta-D-fructose 1,6-bisphosphate. The Proton acceptor role is filled by histidine 181. Tyrosine 226 carries the post-translational modification Phosphotyrosine. Residue threonine 235 coordinates substrate.

This sequence belongs to the LDH/MDH superfamily. LDH family. Homotetramer.

Its subcellular location is the cytoplasm. The catalysed reaction is (S)-lactate + NAD(+) = pyruvate + NADH + H(+). It participates in fermentation; pyruvate fermentation to lactate; (S)-lactate from pyruvate: step 1/1. Allosterically activated by fructose 1,6-bisphosphate (FBP). Functionally, catalyzes the conversion of lactate to pyruvate. The chain is L-lactate dehydrogenase from Streptococcus pneumoniae (strain 70585).